Here is a 1190-residue protein sequence, read N- to C-terminus: Phosphatidylinositol-3,5-bisphosphate 3-phosphatase MTMR4 (1190 aa).

Ser8 bears the Phosphoserine mark. The region spanning 153–570 (EHIRCRQEAE…RALHLWTAVY (418 aa)) is the Myotubularin phosphatase domain. A 1,2-diacyl-sn-glycero-3-phospho-(1D-myo-inositol-3,5-bisphosphate)-binding residues include Asn320, Asn345, and Ile346. 3 residues coordinate a 1,2-diacyl-sn-glycero-3-phospho-(1D-myo-inositol-3-phosphate): Asn320, Asn345, and Ile346. Residue Cys407 is the Phosphocysteine intermediate of the active site. Residues Ser408, Asp409, Gly410, Trp411, Asp412, Arg413, Lys449, and Arg453 each contribute to the a 1,2-diacyl-sn-glycero-3-phospho-(1D-myo-inositol-3,5-bisphosphate) site. The a 1,2-diacyl-sn-glycero-3-phospho-(1D-myo-inositol-3-phosphate) site is built by Ser408, Asp409, Gly410, Trp411, Asp412, and Arg413. A 1,2-diacyl-sn-glycero-3-phospho-(1D-myo-inositol-3-phosphate) is bound at residue Arg453. 2 positions are modified to phosphoserine: Ser610 and Ser629. 3 disordered regions span residues 616–694 (SACD…FKGH), 724–749 (ETEA…GKPP), and 773–848 (DFPE…PSSV). A compositionally biased stretch (polar residues) spans 618 to 637 (CDTSSPLTRTSSDPNLNNHS). Residues 782 to 847 (LTGTPQQPHL…SISHQEQPSS (66 aa)) show a composition bias toward polar residues. The PY-motif; substrate motif for NEDD4 motif lies at 999–1003 (VPPLY). A coiled-coil region spans residues 1020-1052 (LRQIEAGYRQEVEQLRRQVRELQMRLDIRHCCA). The FYVE-type zinc-finger motif lies at 1109 to 1169 (DHMASHCFNC…VCNSCYEHIQ (61 aa)). The Zn(2+) site is built by Cys1115, Cys1118, Cys1131, Cys1134, Cys1139, Cys1142, Cys1161, and Cys1164.

This sequence belongs to the protein-tyrosine phosphatase family. Non-receptor class myotubularin subfamily. Homooligomeric. Forms MTMR3:MTMR4 heterooligomers; regulates the localization of both proteins. The MTMR3:MTMR4 heterooligomer can also recruit both CEP55 and PLK1; occurs during early mitosis, regulates the phosphorylation of CEP55 by PLK1 and its recruitment to the midbody where it can mediate cell abscission. Interacts with SMAD2 and SMAD3; negatively regulates TGF-beta signaling through SMAD2 and SMAD3 dephosphorylation and retention in endosomes. Interacts with SMAD1; negatively regulates BMP signaling through SMAD1 dephosphorylation and retention in endosomes. In terms of processing, ubiquitinated. Ubiquitination by NEDD4 probably leads to proteasomal degradation. Post-translationally, phosphorylated by CDK1 during mitosis.

Its subcellular location is the early endosome membrane. The protein localises to the recycling endosome membrane. The protein resides in the late endosome membrane. It localises to the cytoplasmic vesicle. It is found in the phagosome membrane. The catalysed reaction is a 1,2-diacyl-sn-glycero-3-phospho-(1D-myo-inositol-3-phosphate) + H2O = a 1,2-diacyl-sn-glycero-3-phospho-(1D-myo-inositol) + phosphate. It carries out the reaction a 1,2-diacyl-sn-glycero-3-phospho-(1D-myo-inositol-3,5-bisphosphate) + H2O = a 1,2-diacyl-sn-glycero-3-phospho-(1D-myo-inositol-5-phosphate) + phosphate. The enzyme catalyses 1,2-dioctanoyl-sn-glycero-3-phospho-(1-D-myo-inositol-3-phosphate) + H2O = 1,2-dioctanoyl-sn-glycero-3-phospho-(1D-myo-inositol) + phosphate. It catalyses the reaction 1,2-dioctanoyl-sn-glycero-3-phospho-(1D-myo-inositol-3,5-bisphosphate) + H2O = 1,2-dioctanoyl-sn-glycero-3-phospho-(1D-myo-inositol-5-phosphate) + phosphate. Functionally, lipid phosphatase that specifically dephosphorylates the D-3 position of phosphatidylinositol 3-phosphate and phosphatidylinositol 3,5-bisphosphate, generating phosphatidylinositol and phosphatidylinositol 5-phosphate. Decreases the levels of phosphatidylinositol 3-phosphate, a phospholipid found in cell membranes where it acts as key regulator of both cell signaling and intracellular membrane traffic, in a subset of endosomal membranes to negatively regulate both endocytic recycling and trafficking and/or maturation of endosomes toward lysosomes. Through phosphatidylinositol 3-phosphate turnover in phagosome membranes regulates phagocytosis and phagosome maturation. By decreasing phosphatidylinositol 3-monophosphate (PI3P) levels in immune cells it can also regulate the innate immune response. Beside its lipid phosphatase activity, can also function as a molecular adapter to regulate midbody abscission during mitotic cytokinesis. Can also negatively regulate TGF-beta and BMP signaling through Smad proteins dephosphorylation and retention in endosomes. The sequence is that of Phosphatidylinositol-3,5-bisphosphate 3-phosphatase MTMR4 from Mus musculus (Mouse).